A 795-amino-acid chain; its full sequence is MSARTPLPTVNERDTENHTSVDGYTETHIPPAKSSSRQNLPRCRNSITSATDEQPHIGNYRLQKTIGKGNFAKVKLARHVLTGREVAVKIIDKTQLNPTSLQKLFREVRIMKILNHPNIVKLFEVIETEKTLYLVMEYASGGEVFDYLVAHGRMKEKEARAKFRQIVSAVQYCHQKCIVHRDLKAENLLLDADMNIKIADFGFSNEFTVGNKLDTFCGSPPYAAPELFQGKKYDGPEVDVWSLGVILYTLVSGSLPFDGQNLKELRERVLRGKYRIPFYMSTDCENLLKKLLVLNPIKRGSLEQIMKDRWMNVGHEEEELKPYSEPELDLSDAKRIDIMVTMGFARDEINDALVSQKYDEVMATYILLGRKPPEFEGGESLSSGSLCQRSRPSSDLNNSTLQSPAHLKVQRSISANQKQRRFSDHAGPSIPPAVSYTKRPQANSVESEQKEEWGKDTARRLGSTTVGSKSEVTASPLVGPDRKKSTASPSNNVYSGGSMARRNTYVCERSTDRYAALQNGRDSSLTEMSASSMSSAGSTVASAGPSARPRHQKSMSTSGHPIKVTLPTIKDGSEAYRPGAAQRVPAASPSAHSISASTPDRTRFPRGSSSRSTFHGEQLRERRSAAYNGPPASPSHETGAFAHARRGTSTGIISKITSKFVRRDPSEGEASGRADTARGSSGDPKERDKDEGKEAKPRSLRFTWSMKTTSSMDPNDMLREIRKVLDANTCDYEQKERFLLFCVHGDARQDSLVQWEMEVCKLPRLSLNGVRFKRISGTSIAFKNIASKIANELKL.

Positions methionine 1–proline 41 are disordered. A Phosphothreonine modification is found at threonine 5. The Protein kinase domain occupies tyrosine 60–methionine 311. ATP-binding positions include isoleucine 66–valine 74 and lysine 89. The active-site Proton acceptor is the aspartate 182. A Phosphothreonine modification is found at threonine 208. Threonine 215 carries the post-translational modification Phosphothreonine; by LKB1 and TAOK1. Position 219 is a phosphoserine; by GSK3-beta (serine 219). In terms of domain architecture, UBA spans aspartate 329 to arginine 370. Disordered stretches follow at residues glycine 377–serine 498 and glutamine 518–serine 699. Phosphoserine is present on residues serine 382, serine 390, serine 393, serine 403, serine 423, and serine 444. The segment covering cysteine 387 to serine 403 has biased composition (polar residues). A compositionally biased stretch (basic and acidic residues) spans serine 447–arginine 459. Residues glycine 462–threonine 473 are compositionally biased toward polar residues. Position 475 is a phosphoserine (serine 475). Residues threonine 486–serine 495 show a composition bias toward polar residues. 2 stretches are compositionally biased toward low complexity: residues serine 523–alanine 547 and proline 585–proline 599. A Phosphoserine modification is found at serine 588. Residue threonine 613 is modified to Phosphothreonine; by PKC/PRKCZ. Residues glycine 647 to threonine 657 show a composition bias toward polar residues. Basic and acidic residues-rich tracts occupy residues valine 661–threonine 676 and aspartate 683–proline 697. Serine 666 bears the Phosphoserine mark. The region spanning aspartate 746 to leucine 795 is the KA1 domain.

This sequence belongs to the protein kinase superfamily. CAMK Ser/Thr protein kinase family. SNF1 subfamily. Interacts with MAPT/TAU. Mg(2+) is required as a cofactor. Post-translationally, phosphorylated at Thr-215 by STK11/LKB1 in complex with STE20-related adapter-alpha (STRADA) pseudo kinase and CAB39. Phosphorylation at Thr-215 by TAOK1 activates the kinase activity, leading to phosphorylation and detachment of MAPT/TAU from microtubules. Phosphorylation at Ser-219 by GSK3-beta (GSK3B) inhibits the kinase activity. Phosphorylation at Thr-613 by PRKCZ/aPKC in polarized epithelial cells inhibits the kinase activity.

Its subcellular location is the cell membrane. It localises to the cytoplasm. The protein resides in the cytoskeleton. The protein localises to the cell projection. It is found in the dendrite. It catalyses the reaction L-seryl-[protein] + ATP = O-phospho-L-seryl-[protein] + ADP + H(+). It carries out the reaction L-threonyl-[protein] + ATP = O-phospho-L-threonyl-[protein] + ADP + H(+). The enzyme catalyses L-seryl-[tau protein] + ATP = O-phospho-L-seryl-[tau protein] + ADP + H(+). The catalysed reaction is L-threonyl-[tau protein] + ATP = O-phospho-L-threonyl-[tau protein] + ADP + H(+). Inhibited by phosphorylation at Ser-219. Activated by phosphorylation on Thr-215. Functionally, serine/threonine-protein kinase. Involved in cell polarity and microtubule dynamics regulation. Phosphorylates DCX, MAP2 and MAP4. Phosphorylates the microtubule-associated protein MAPT/TAU. Involved in cell polarity by phosphorylating the microtubule-associated proteins MAP2, MAP4 and MAPT/TAU at KXGS motifs, causing detachment from microtubules, and their disassembly. Involved in the regulation of neuronal migration through its dual activities in regulating cellular polarity and microtubule dynamics, possibly by phosphorylating and regulating DCX. Also acts as a positive regulator of the Wnt signaling pathway, probably by mediating phosphorylation of dishevelled proteins (DVL1, DVL2 and/or DVL3). The sequence is that of Serine/threonine-protein kinase MARK1 from Mus musculus (Mouse).